A 156-amino-acid polypeptide reads, in one-letter code: Ribonuclease pancreatic (156 aa).

An N-terminal signal peptide occupies residues 1 to 28 (MALEKSLVLLPLFVLMLLVLGWVQPSLG). 2 residues coordinate substrate: K35 and R38. The Proton acceptor role is filled by H40. N-linked (GlcNAc...) asparagine glycans are attached at residues N50 and N62. 4 disulfide bridges follow: C54–C112, C68–C123, C86–C138, and C93–C100. Residues 69-73 (KPVNT) and K94 contribute to the substrate site. N104 carries an N-linked (GlcNAc...) asparagine glycan. Substrate is bound at residue R113. The N-linked (GlcNAc...) asparagine glycan is linked to N116. H147 serves as the catalytic Proton donor.

The protein belongs to the pancreatic ribonuclease family. In terms of assembly, monomer. Interacts with and forms tight 1:1 complexes with RNH1. Dimerization of two such complexes may occur. Interaction with RNH1 inhibits this protein.

Its subcellular location is the secreted. It catalyses the reaction an [RNA] containing cytidine + H2O = an [RNA]-3'-cytidine-3'-phosphate + a 5'-hydroxy-ribonucleotide-3'-[RNA].. It carries out the reaction an [RNA] containing uridine + H2O = an [RNA]-3'-uridine-3'-phosphate + a 5'-hydroxy-ribonucleotide-3'-[RNA].. Functionally, endonuclease that catalyzes the cleavage of RNA on the 3' side of pyrimidine nucleotides. Acts on single-stranded and double-stranded RNA. The protein is Ribonuclease pancreatic (RNASE1) of Nomascus leucogenys (Northern white-cheeked gibbon).